The sequence spans 549 residues: MSSQHSTDDLMNSHVFSGGFSTLDDKGFQDVPIHTDMPGSISVEPSSEDANVGSVNGNINETPVFEADRLIAEATMNPSAASSTTGENSISQTGSGPFLRIRIVDIEAENSKDPVIKMNVQTTLPAYRSKLYKNVRRTHAEFKKFAKYLISTHPECLIPAVPEAKTSVSSGIKEDLIYLKSGLQSWLNYVSTNPNLLYDPELQLFVESDYGYSPLINTGNPTSGLKRKALKQFPLPPDPCQALANLRPIVKSFYKNAKDAEIKLEKLVNRKQSLALTHADLGQSLIDYSVEEQHNGLANALNRVGKMLQAISDVRIMQSSKQLVTLADSLCYASDNAFVVKEILSNRHILMRDLISSKNQTNSYLSAANRLQDSPKISKARTDDALQALEVARVHEKLLSDKVDFVTLNLVKESKTYTKKTSVSLQKAIREYVEKEAYYERRLLSIMESIRPHIRNIDPFGGLSRLGREEYPRRLSNPPPSQKTNQDAWTNRKRPGYSSSFDGSSQSTFNPSNNDGAHNTSENADELVEPPIGNERLDPKSVANLLNAI.

One can recognise a PX domain in the interval 96 to 213 (GPFLRIRIVD…LFVESDYGYS (118 aa)). A coiled-coil region spans residues 250–281 (VKSFYKNAKDAEIKLEKLVNRKQSLALTHADL). Positions 470–540 (EYPRRLSNPP…PIGNERLDPK (71 aa)) are disordered. The span at 498 to 507 (SSSFDGSSQS) shows a compositional bias: low complexity. The span at 508-522 (TFNPSNNDGAHNTSE) shows a compositional bias: polar residues.

The protein belongs to the VPS17 family. As to quaternary structure, component of the retromer complex which consists of vps29, vps6, vps35, vps5 and vps17.

Its subcellular location is the cytoplasm. The protein resides in the nucleus. In terms of biological role, plays a role in vesicular protein sorting. Required for the endosome-to-Golgi retrieval of the vacuolar protein sorting receptor pep1/vps10. Component of the membrane-associated retromer complex which is essential in endosome-to-Golgi retrograde transport. The vps29-vps26-vps35 subcomplex may be involved in cargo selection. In Schizosaccharomyces pombe (strain 972 / ATCC 24843) (Fission yeast), this protein is Vacuolar protein sorting-associated protein 17 (vps17).